Here is a 332-residue protein sequence, read N- to C-terminus: Phosphate acyltransferase (332 aa).

This sequence belongs to the PlsX family. Homodimer. Probably interacts with PlsY.

Its subcellular location is the cytoplasm. The catalysed reaction is a fatty acyl-[ACP] + phosphate = an acyl phosphate + holo-[ACP]. It participates in lipid metabolism; phospholipid metabolism. Its function is as follows. Catalyzes the reversible formation of acyl-phosphate (acyl-PO(4)) from acyl-[acyl-carrier-protein] (acyl-ACP). This enzyme utilizes acyl-ACP as fatty acyl donor, but not acyl-CoA. The polypeptide is Phosphate acyltransferase (Fusobacterium nucleatum subsp. nucleatum (strain ATCC 25586 / DSM 15643 / BCRC 10681 / CIP 101130 / JCM 8532 / KCTC 2640 / LMG 13131 / VPI 4355)).